The chain runs to 359 residues: 4'-phosphopantetheinyl transferase A (359 aa).

Belongs to the P-Pant transferase superfamily.

The catalysed reaction is apo-[ACP] + CoA = holo-[ACP] + adenosine 3',5'-bisphosphate + H(+). Its activity is regulated as follows. Activity is inhibited bythe antifunfal copmpounds PD 404,182, 6-nitroso-1,2-benzopyrone, and calmidazolium chloride with IC(50) values of 3.9 uM, 35.2 uM, and 19.2 uM, respectively. Functionally, acyl-carrier-protein synthase that transfers the 4'-phosphopantetheine moiety from coenzyme A to a Ser of an acyl-carrier-protein. The 4'-phosphopantetheine (4'-PPT) portion of CoA provides the essential prosthetic group for a number of carrier proteins and multi-domain enzymes, priming them for the acceptance of acyl building blocks in fatty acid synthesis and many aspects of secondary metabolism mediated by polyketide synthases (PKSs) and non-ribosomal peptide synthetases (NRPSs). PptA is able to transfer the cofactor to a broad range of enzymes with acyl- or peptidyl-carrier protein domains and activates target enzymes involved in the synthesis of lysine, but also secondary metabolites including gliotoxin, fumigaclavine C, fumiquinazole A, fumiquinazoline C, pyripyroprene A, fumagillin, the siderophores triacetylfusarinine C (TAFC) and ferricrocin (FC), and dihydroxy naphthalene (DHN)-melanin. Plays an essential role in virulence. The sequence is that of 4'-phosphopantetheinyl transferase A from Aspergillus fumigatus (strain ATCC MYA-4609 / CBS 101355 / FGSC A1100 / Af293) (Neosartorya fumigata).